The following is a 123-amino-acid chain: Anti-lipopolysaccharide factor (123 aa).

The first 26 residues, 1–26 (MRKGVVAGLCLALVVMCLYLPQPCEA), serve as a signal peptide directing secretion. The N-linked (GlcNAc...) asparagine glycan is linked to N45. C55 and C76 are disulfide-bonded.

As to expression, isoform 1 is highly expressed in muscle and stomach, moderately in heart and gill and at lower levels in hemocytes and hepatopancreas. Isoform 2 is mainly expressed in gill, hepatopancreas, muscle and eyestalk.

Its subcellular location is the secreted. In terms of biological role, may bind to bacterial LPS and thus specifically inhibit the LPS-mediated activation of the hemolymph coagulation. It has a strong antibacterial effect especially on the growth of Gram-negative bacteria. In Portunus trituberculatus (Swimming crab), this protein is Anti-lipopolysaccharide factor.